Reading from the N-terminus, the 453-residue chain is Growth/differentiation factor 9 (453 aa).

A signal peptide spans M1–S25. A propeptide spanning residues Q26 to R318 is cleaved from the precursor. Residues N106, N163, N236, N255, and N269 are each glycosylated (N-linked (GlcNAc...) asparagine). The disordered stretch occupies residues S281–A300. Residue N337 is glycosylated (N-linked (GlcNAc...) asparagine). 3 cysteine pairs are disulfide-bonded: C352–C418, C381–C450, and C385–C452.

It belongs to the TGF-beta family. In terms of assembly, homodimer or heterodimer (Potential). But, in contrast to other members of this family, cannot be disulfide-linked. Phosphorylated; phosphorylation is critical for GDF9 function.

Its subcellular location is the secreted. Functionally, required for ovarian folliculogenesis. The sequence is that of Growth/differentiation factor 9 (GDF9) from Bos taurus (Bovine).